The sequence spans 82 residues: DNA-directed RNA polymerase subunit omega (82 aa).

It belongs to the RNA polymerase subunit omega family. As to quaternary structure, in cyanobacteria the RNAP catalytic core is composed of 2 alpha, 1 beta, 1 beta', 1 gamma and 1 omega subunit. When a sigma factor is associated with the core the holoenzyme is formed, which can initiate transcription.

It carries out the reaction RNA(n) + a ribonucleoside 5'-triphosphate = RNA(n+1) + diphosphate. Promotes RNA polymerase assembly. Latches the N- and C-terminal regions of the beta' subunit thereby facilitating its interaction with the beta and alpha subunits. The sequence is that of DNA-directed RNA polymerase subunit omega from Synechococcus sp. (strain CC9902).